The chain runs to 135 residues: C-type Lectin CRL (135 aa).

Disulfide bonds link cysteine 3-cysteine 14, cysteine 31-cysteine 131, cysteine 38-cysteine 133, and cysteine 106-cysteine 123. The C-type lectin domain maps to methionine 10 to glutamine 132. The Ca(2+) site is built by glutamine 96, aspartate 98, glutamate 104, asparagine 119, and aspartate 120. The Galactose-binding motif lies at glutamine 96–aspartate 98.

It belongs to the true venom lectin family. In terms of assembly, homodimer; disulfide-linked. Expressed by the venom gland.

The protein resides in the secreted. Functionally, beta-galactoside and N-acetylgalactosamine (GalNAc) specific C-type lectin. The sequence is that of C-type Lectin CRL from Crotalus ruber ruber (Red diamond rattlesnake).